A 581-amino-acid polypeptide reads, in one-letter code: Arginine--tRNA ligase (581 aa).

A 'HIGH' region motif is present at residues 122-132 (PNVAKPMHVGH).

It belongs to the class-I aminoacyl-tRNA synthetase family. Monomer.

It is found in the cytoplasm. It carries out the reaction tRNA(Arg) + L-arginine + ATP = L-arginyl-tRNA(Arg) + AMP + diphosphate. The chain is Arginine--tRNA ligase from Francisella tularensis subsp. novicida (strain U112).